Reading from the N-terminus, the 174-residue chain is MQMMSLEKEAAMETKTAEQRSLDYRNAMARLGAAVNIVTTDGAAGRAGFAATAVCSVSDNPPTLLVCLNRNASAYKVVKANGVICINTLAAHHEVLSTLFGGKTPAEERFAAGSWGVLETGAPVLEDALVSFDCRIREAHDGGTHDILICTVVDMKINAGDEALMYFNRRYRVL.

This sequence belongs to the non-flavoprotein flavin reductase family. RutF subfamily.

The catalysed reaction is FMNH2 + NAD(+) = FMN + NADH + 2 H(+). Functionally, catalyzes the reduction of FMN to FMNH2 which is used to reduce pyrimidine by RutA via the Rut pathway. The protein is FMN reductase (NADH) RutF of Agrobacterium fabrum (strain C58 / ATCC 33970) (Agrobacterium tumefaciens (strain C58)).